The following is a 690-amino-acid chain: DNA-directed RNA polymerase subunit beta' (690 aa).

Residues Cys-76, Cys-78, Cys-94, and Cys-97 each coordinate Zn(2+). 3 residues coordinate Mg(2+): Asp-496, Asp-498, and Asp-500.

Belongs to the RNA polymerase beta' chain family. RpoC1 subfamily. In plastids the minimal PEP RNA polymerase catalytic core is composed of four subunits: alpha, beta, beta', and beta''. When a (nuclear-encoded) sigma factor is associated with the core the holoenzyme is formed, which can initiate transcription. It depends on Mg(2+) as a cofactor. Zn(2+) serves as cofactor.

The protein localises to the plastid. The protein resides in the chloroplast. It carries out the reaction RNA(n) + a ribonucleoside 5'-triphosphate = RNA(n+1) + diphosphate. In terms of biological role, DNA-dependent RNA polymerase catalyzes the transcription of DNA into RNA using the four ribonucleoside triphosphates as substrates. The sequence is that of DNA-directed RNA polymerase subunit beta' from Lemna minor (Common duckweed).